Here is a 485-residue protein sequence, read N- to C-terminus: D-alanine--D-alanyl carrier protein ligase (485 aa).

Threonine 144–serine 145 is a binding site for ATP. Residue aspartate 189 participates in D-alanine binding. Asparagine 284–threonine 289 is an ATP binding site. Valine 293 is a D-alanine binding site. ATP contacts are provided by aspartate 365 and lysine 473. Residue lysine 473 participates in D-alanine binding.

It belongs to the ATP-dependent AMP-binding enzyme family. DltA subfamily.

It localises to the cytoplasm. It carries out the reaction holo-[D-alanyl-carrier protein] + D-alanine + ATP = D-alanyl-[D-alanyl-carrier protein] + AMP + diphosphate. The protein operates within cell wall biogenesis; lipoteichoic acid biosynthesis. Catalyzes the first step in the D-alanylation of lipoteichoic acid (LTA), the activation of D-alanine and its transfer onto the D-alanyl carrier protein (Dcp) DltC. In an ATP-dependent two-step reaction, forms a high energy D-alanyl-AMP intermediate, followed by transfer of the D-alanyl residue as a thiol ester to the phosphopantheinyl prosthetic group of the Dcp. D-alanylation of LTA plays an important role in modulating the properties of the cell wall in Gram-positive bacteria, influencing the net charge of the cell wall. This Staphylococcus aureus (strain MRSA252) protein is D-alanine--D-alanyl carrier protein ligase.